The primary structure comprises 705 residues: MTIEDLPDFPLEGNPLFGRYPFIFSASDTPVIFSISAAPMPSDCEFSFFDPNDASCQEILFDPKTSVSELFAILRQWVPQVQQNIDIIGNEILKRGCNVNDRDGLTDMTLLHYTCKSGAHGIGDVETAVKFATQLIDLGADISLRSRWTNMNALHYAAYFDVPELIRVILKTSKPKDVDATCSDFNFGTALHIAAYNLCAGAVKCLLEQGANPAFRNDKGQIPADVVPDPVDMPLEMADAAATAKEIKQMLLDAVPLSCNISKAMLPNYDHVTGKAMLTSLGLKLGDRVVIAGQKVGTLRFCGTTEFASGQWAGIELDEPEGKNNGSVGKVQYFKCAPKYGIFAPLSKISKAKGRRKNITHTPSTKAAVPLIRSQKIDVAHVTSKVNTGLMTSKKDSASESTLSLPPGEELKTVTEKDVALLGSVSSCSSTSSLEHRQSYPKKQNAISSNKKTMSKSPSLSSRASAGLNSSATSTANNSRCEGELRLGERVLVVGQRLGTIRFFGTTNFAPGYWYGIELEKPHGKNDGSVGGVQYFSCSPRYGIFAPPSRVQRVTDSLDTLSEISSNKQNHSYPGFRRSFSTTSASSQKEINRRNAFSKSKAALRRSWSSTPTAGGIEGSVKLHEGSQVLLTSSNEMGTVRYVGPTDFASGIWLGLELRSAKGKNDGSVGDKRYFTCKPNHGVLVRPSRVTYRGINGSKLVDENC.

ANK repeat units follow at residues 65–101 (TSVS…NVND), 149–180 (TNMN…DVDA), and 186–215 (NFGT…NPAF). In terms of domain architecture, CAP-Gly 1 spans 303 to 345 (GTTEFASGQWAGIELDEPEGKNNGSVGKVQYFKCAPKYGIFAP). Disordered regions lie at residues 391–410 (MTSK…PGEE) and 431–479 (TSSL…ANNS). Polar residues predominate over residues 441–452 (PKKQNAISSNKK). Residues 455 to 479 (SKSPSLSSRASAGLNSSATSTANNS) show a composition bias toward low complexity. In terms of domain architecture, CAP-Gly 2 spans 505 to 547 (GTTNFAPGYWYGIELEKPHGKNDGSVGGVQYFSCSPRYGIFAP). 2 positions are modified to phosphoserine: serine 557 and serine 609. In terms of domain architecture, CAP-Gly 3 spans 644 to 686 (GPTDFASGIWLGLELRSAKGKNDGSVGDKRYFTCKPNHGVLVR).

The sequence is that of CAP-Gly domain-containing linker protein 4 (CLIP4) from Homo sapiens (Human).